Reading from the N-terminus, the 185-residue chain is C-phycoerythrin beta chain (185 aa).

The (2R,3E)-phycoerythrobilin site is built by Cys49 and Cys60. Position 71 is an N4-methylasparagine (Asn71). (2R,3E)-phycoerythrobilin is bound by residues Cys81 and Cys166.

Belongs to the phycobiliprotein family. As to quaternary structure, heterodimer of an alpha and a beta chain. Contains three covalently linked bilin chromophores.

The protein resides in the cellular thylakoid membrane. In terms of biological role, light-harvesting photosynthetic bile pigment-protein from the phycobiliprotein complex. The sequence is that of C-phycoerythrin beta chain (cpeB) from Pseudanabaena tenuis (strain PCC 7409).